We begin with the raw amino-acid sequence, 394 residues long: MIISAASDYRAAAQRILPPFLFHYIDGGAYAEHTLRRNVEDLSDVALRQRILRNMSDLSLETTLFNEKLAMPTALAPVGLCGMYARRGEVQAAGAADDKGIPFTLSTVSVCPIEEVAPTIKRPMWFQLYVLRDRGFMRNALERAKAAGCSTLVFTVDMPTPGARYRDAHSGMSGPNAALRRYWQAVTHPQWAWDVGLNGRPHDLGNISAYLGQPTGLEDYIGWLANNFDPSISWKDLEWIRDFWDGPMVIKGILDPEDARDAVRFGADGIVVSNHGGRQLDGVLSSARALPAIADAVKGDITILADSGIRNGLDVVRMIALGADSVLLGRAYLYALATHGKQGVANLLNLIEKEMKVAMTLTGAKTIREISRDSLVQNAEALQTFDALKQNNAA.

Positions 1–380 (MIISAASDYR…SRDSLVQNAE (380 aa)) constitute an FMN hydroxy acid dehydrogenase domain. Y24 is a binding site for substrate. S106 and Q127 together coordinate FMN. Position 129 (Y129) interacts with substrate. FMN is bound at residue T155. R164 is a substrate binding site. K251 lines the FMN pocket. H275 serves as the catalytic Proton acceptor. R278 is a binding site for substrate. 306–330 (DSGIRNGLDVVRMIALGADSVLLGR) provides a ligand contact to FMN.

This sequence belongs to the FMN-dependent alpha-hydroxy acid dehydrogenase family. Requires FMN as cofactor.

The protein localises to the cell inner membrane. The catalysed reaction is (S)-lactate + A = pyruvate + AH2. Catalyzes the conversion of L-lactate to pyruvate. Is coupled to the respiratory chain. This is L-lactate dehydrogenase from Klebsiella pneumoniae (strain 342).